We begin with the raw amino-acid sequence, 341 residues long: Phenylalanine--tRNA ligase alpha subunit (341 aa).

Residue Glu-254 coordinates Mg(2+).

It belongs to the class-II aminoacyl-tRNA synthetase family. Phe-tRNA synthetase alpha subunit type 1 subfamily. As to quaternary structure, tetramer of two alpha and two beta subunits. It depends on Mg(2+) as a cofactor.

Its subcellular location is the cytoplasm. It catalyses the reaction tRNA(Phe) + L-phenylalanine + ATP = L-phenylalanyl-tRNA(Phe) + AMP + diphosphate + H(+). The chain is Phenylalanine--tRNA ligase alpha subunit (pheS) from Mycoplasma pneumoniae (strain ATCC 29342 / M129 / Subtype 1) (Mycoplasmoides pneumoniae).